Here is a 702-residue protein sequence, read N- to C-terminus: Polyribonucleotide nucleotidyltransferase (702 aa).

Residues aspartate 493 and aspartate 499 each contribute to the Mg(2+) site. The region spanning 560-619 (PRLLTMRIDPERIRDVIGKGGATIRGLTEETGTNIDISDEGVVTIASADKAAAEEAKKRI) is the KH domain. The S1 motif domain occupies 629–697 (GKVYDGKVAK…RQGRIRLSMK (69 aa)).

The protein belongs to the polyribonucleotide nucleotidyltransferase family. In terms of assembly, component of the RNA degradosome, which is a multiprotein complex involved in RNA processing and mRNA degradation. The cofactor is Mg(2+).

The protein resides in the cytoplasm. The catalysed reaction is RNA(n+1) + phosphate = RNA(n) + a ribonucleoside 5'-diphosphate. In terms of biological role, involved in mRNA degradation. Catalyzes the phosphorolysis of single-stranded polyribonucleotides processively in the 3'- to 5'-direction. The protein is Polyribonucleotide nucleotidyltransferase of Halorhodospira halophila (strain DSM 244 / SL1) (Ectothiorhodospira halophila (strain DSM 244 / SL1)).